The following is a 329-amino-acid chain: Deoxyhypusine hydroxylase (329 aa).

HEAT-like PBS-type repeat units lie at residues 65 to 91 (LKHELAYCLGQSGHDAAIAPLRGVLED), 99 to 124 (RHEAAEALGALSDKGSLELLKKMRDD), 232 to 258 (FRHEIAFVFGQLSHPASIPSLTEALSN), and 265 to 292 (VRHEAAEALGSLGDEEGVEETLKKFLND). Fe cation-binding residues include H67, E68, H100, E101, H234, E235, H267, and E268.

The protein belongs to the deoxyhypusine hydroxylase family. The cofactor is Fe(2+).

The protein localises to the cytoplasm. The protein resides in the nucleus. It catalyses the reaction [eIF5A protein]-deoxyhypusine + AH2 + O2 = [eIF5A protein]-hypusine + A + H2O. Its pathway is protein modification; eIF5A hypusination. Its function is as follows. Catalyzes the hydroxylation of the N(6)-(4-aminobutyl)-L-lysine intermediate to form hypusine, an essential post-translational modification only found in mature eIF-5A factor. This is Deoxyhypusine hydroxylase from Phaeosphaeria nodorum (strain SN15 / ATCC MYA-4574 / FGSC 10173) (Glume blotch fungus).